The primary structure comprises 1706 residues: 5'-3' exoribonuclease 1 (1706 aa).

Residue serine 1348 is modified to Phosphoserine. The segment at glutamate 1619–glutamate 1706 is disordered. Polar residues predominate over residues alanine 1623–valine 1642. Residue serine 1645 is modified to Phosphoserine. Low complexity predominate over residues arginine 1647–serine 1657. Polar residues predominate over residues proline 1658–serine 1676. The span at isoleucine 1677–lysine 1694 shows a compositional bias: basic residues.

It belongs to the 5'-3' exonuclease family. In terms of assembly, found in a mRNP complex with UPF1, UPF2, UPF3B and XRN1. Associates with alpha and beta tubulins. Interacts with DIS3L2. Interacts with ZC3HAV1 in an RNA-dependent manner. Interacts with ZFP36L1. Interacts with TRIM71 (via NHL repeats) in an RNA-dependent manner. Interacts with YTHDC2 (via ANK repeats). Interacts with DHX34; the interaction is RNA-independent. Expressed in heart, brain, pancreas, spleen, testis, osteogenic sarcoma (OGS) biopsy and primary cell lines.

The protein localises to the cytoplasm. Functionally, major 5'-3' exoribonuclease involved in mRNA decay. Required for the 5'-3'-processing of the G4 tetraplex-containing DNA and RNA substrates. The kinetic of hydrolysis is faster for G4 RNA tetraplex than for G4 DNA tetraplex and monomeric RNA tetraplex. Binds to RNA and DNA. Plays a role in replication-dependent histone mRNA degradation. May act as a tumor suppressor protein in osteogenic sarcoma (OGS). This Homo sapiens (Human) protein is 5'-3' exoribonuclease 1.